A 428-amino-acid polypeptide reads, in one-letter code: tRNA(Ile2) 2-agmatinylcytidine synthetase TiaS (428 aa).

It belongs to the TiaS family.

The protein localises to the cytoplasm. It catalyses the reaction cytidine(34) in tRNA(Ile2) + agmatine + ATP + H2O = 2-agmatinylcytidine(34) in tRNA(Ile2) + AMP + 2 phosphate + 2 H(+). Functionally, ATP-dependent agmatine transferase that catalyzes the formation of 2-agmatinylcytidine (agm2C) at the wobble position (C34) of tRNA(Ile2), converting the codon specificity from AUG to AUA. This chain is tRNA(Ile2) 2-agmatinylcytidine synthetase TiaS, found in Methanosarcina acetivorans (strain ATCC 35395 / DSM 2834 / JCM 12185 / C2A).